Consider the following 415-residue polypeptide: Multidrug resistance protein MdtA (415 aa).

Residues 1-21 form the signal peptide; that stretch reads MKGSYKSRWVIVIVVVIAAIA. The segment covering 31-47 has biased composition (polar residues); that stretch reads DSQSAAPGATKQAQQSP. Disordered regions lie at residues 31–60 and 392–415; these read DSQSAAPGATKQAQQSPAGGRRGMRSGPLA and EAQSTTTSEEKATSREYAKKGARS. Over residues 399–415 the composition is skewed to basic and acidic residues; that stretch reads SEEKATSREYAKKGARS.

This sequence belongs to the membrane fusion protein (MFP) (TC 8.A.1) family. As to quaternary structure, part of a tripartite efflux system composed of MdtA, MdtB and MdtC.

Its subcellular location is the cell inner membrane. In terms of biological role, the MdtABC tripartite complex confers resistance against novobiocin and deoxycholate. The sequence is that of Multidrug resistance protein MdtA from Escherichia coli O139:H28 (strain E24377A / ETEC).